The following is a 294-amino-acid chain: Protease HtpX homolog 2 (294 aa).

2 helical membrane passes run Met-15–Tyr-35 and Tyr-36–Phe-56. His-140 contacts Zn(2+). Glu-141 is a catalytic residue. Zn(2+) is bound at residue His-144. The next 2 membrane-spanning stretches (helical) occupy residues Ala-151–Leu-171 and Gly-185–Ile-205. Glu-213 lines the Zn(2+) pocket.

This sequence belongs to the peptidase M48B family. It depends on Zn(2+) as a cofactor.

The protein resides in the cell membrane. This is Protease HtpX homolog 2 from Methanosarcina mazei (strain ATCC BAA-159 / DSM 3647 / Goe1 / Go1 / JCM 11833 / OCM 88) (Methanosarcina frisia).